A 155-amino-acid chain; its full sequence is Ribosome maturation factor RimP (155 aa).

The protein belongs to the RimP family.

It localises to the cytoplasm. In terms of biological role, required for maturation of 30S ribosomal subunits. This Hamiltonella defensa subsp. Acyrthosiphon pisum (strain 5AT) protein is Ribosome maturation factor RimP.